The primary structure comprises 273 residues: MMHSKKLTLGICLVLLIILIVGYVIMTKANGQNAQIKDTFNQTLKLYPTKNLDDFYDKEGFRDQEFKKGDKGTWIVNSGMNIQLKGGALKSREMVLYINRNTRTTKGYFIVGEITKDKKGYTHDKDKKGYTHDKDKKYPVKMEHNKIIPTKPIKDEKLKKEIENFKFFVQYGNFKDFKDYKNGDISYNPNVPSYSAKYQLSNDDYNIQQLRKRYDIPTKKAPELLLKGDGDLKGSSIGSKDLEFTFVQNKRENIYFTDSVEFTPSEDTSYESN.

The helical transmembrane segment at 7-27 threads the bilayer; that stretch reads LTLGICLVLLIILIVGYVIMT.

It belongs to the staphylococcal tandem lipoprotein family.

It is found in the cell membrane. This is an uncharacterized protein from Staphylococcus aureus (strain MSSA476).